The sequence spans 810 residues: Actin-regulating kinase PRK1 (810 aa).

The region spanning 22–298 (AKIIKYLTSG…CQVLEEVSRL (277 aa)) is the Protein kinase domain. ATP contacts are provided by residues 28–36 (LTSGGFAQV) and lysine 56. The Proton acceptor role is filled by aspartate 158. Phosphoserine is present on residues serine 402, serine 428, and serine 484. Disordered stretches follow at residues 552–668 (FTGN…NVNI) and 733–761 (GVLD…HLRT). A Phosphothreonine modification is found at threonine 553. Polar residues predominate over residues 553-566 (TGNSVNNSRSASFD). Position 556 is a phosphoserine (serine 556). Positions 567-588 (NNNVNGNGNNTNRRLVSSSTSS) are enriched in low complexity. 2 stretches are compositionally biased toward basic and acidic residues: residues 594–612 (SDTK…EKRR) and 622–639 (FDQH…DYYR). The segment covering 645–658 (KKTQASAKTTSKPT) has biased composition (low complexity). The span at 733–748 (GVLDIKTKSNGKDKSR) shows a compositional bias: basic and acidic residues. An interaction with SH3 domain of ABP1 region spans residues 743 to 756 (GKDKSRPPRPPPKP).

The protein belongs to the protein kinase superfamily. Ser/Thr protein kinase family. In terms of assembly, interacts with ABP1, which is required for proper actin patch localization.

The protein localises to the cytoplasm. It localises to the cytoskeleton. Its subcellular location is the actin patch. It catalyses the reaction L-seryl-[protein] + ATP = O-phospho-L-seryl-[protein] + ADP + H(+). The catalysed reaction is L-threonyl-[protein] + ATP = O-phospho-L-threonyl-[protein] + ADP + H(+). In terms of biological role, protein kinase involved in the regulation of actin cytoskeleton organization and endocytosis. Phosphorylates PAN1 which disrupts the interaction between PAN1 and END3, and between PAN1 and SLA1. Phosphorylates SCD5. Preferentially, phosphorylates substrates on threonine residues in a [L/I/V/M]-x-x-[Q/N/T/S]-x-T-G motif. This Saccharomyces cerevisiae (strain ATCC 204508 / S288c) (Baker's yeast) protein is Actin-regulating kinase PRK1 (PRK1).